The following is a 553-amino-acid chain: Carboxypeptidase Y homolog A (553 aa).

Residues 1–17 (MRVLSTTLLIGAAAAAV) form the signal peptide. A propeptide spanning residues 18–134 (SPPQQVLQAP…RLEAFDLRVK (117 aa)) is cleaved from the precursor. Cystine bridges form between cysteine 189–cysteine 428, cysteine 323–cysteine 337, cysteine 347–cysteine 370, cysteine 354–cysteine 363, and cysteine 392–cysteine 398. The N-linked (GlcNAc...) asparagine glycan is linked to asparagine 220. Residue serine 276 is part of the active site. Residue aspartate 467 is part of the active site. A glycan (N-linked (GlcNAc...) asparagine) is linked at asparagine 518. The active site involves histidine 529.

This sequence belongs to the peptidase S10 family.

It localises to the vacuole. The enzyme catalyses Release of a C-terminal amino acid with broad specificity.. Functionally, vacuolar carboxypeptidase involved in degradation of small peptides. Digests preferentially peptides containing an aliphatic or hydrophobic residue in P1' position, as well as methionine, leucine or phenylalanine in P1 position of ester substrate. In Talaromyces stipitatus (strain ATCC 10500 / CBS 375.48 / QM 6759 / NRRL 1006) (Penicillium stipitatum), this protein is Carboxypeptidase Y homolog A (cpyA).